The chain runs to 1208 residues: Period circadian protein (1208 aa).

Disordered stretches follow at residues 1-171 (MEGG…AAQS) and 214-235 (GPGK…TGQR). Positions 16 to 47 (SDSAYSNSCSNSQSQRSGSSKSRLSGSHSSGS) are enriched in low complexity. The Nuclear localization signal motif lies at 66-79 (KRNKDKSRKKKKNK). Residues 66–79 (KRNKDKSRKKKKNK) are compositionally biased toward basic residues. Composition is skewed to basic and acidic residues over residues 129-139 (QHGEDHSEPKA) and 147-164 (EGDR…ENAA). Residues 217-232 (KVEPVPGVPGTAAAGT) are compositionally biased toward low complexity. PAS domains lie at 242 to 377 (ESFC…ATPI) and 395 to 501 (FAIR…RVFQ). Disordered stretches follow at residues 636 to 747 (VTAP…SSNY), 802 to 821 (EYSG…WEGE), 961 to 982 (TSPT…EMPT), and 1076 to 1208 (VTTP…HGDG). Positions 679 to 697 (NFTTASNIHMSSVTNTSIA) are enriched in polar residues. 17 repeat units span residues 698–699 (GT), 701–702 (GT), 703–704 (GT), 705–706 (GT), 707–708 (GT), 709–710 (GT), 711–712 (GT), 713–714 (GT), 715–716 (GT), 717–718 (GT), 719–720 (GT), 721–722 (GT), 723–724 (GT), 725–726 (GT), 727–728 (GT), 729–730 (GT), and 731–732 (GN). The segment covering 698-740 (GTGGTGTGTGTGTGTGTGTGTGTGTGTGTGTGTGNGTNSGTGT) has biased composition (gly residues). The interval 698 to 742 (GTGGTGTGTGTGTGTGTGTGTGTGTGTGTGTGTGNGTNSGTGTGS) is 21 X 2 AA approximate tandem repeats of G-[TN]. An 18; approximate repeat occupies 734-735 (TN). Repeat copies occupy residues 737-738 (GT) and 739-740 (GT). A 21; approximate repeat occupies 741–742 (GS). Over residues 1076-1092 (VTTPSQVQRSSSQSASV) the composition is skewed to low complexity. The span at 1127-1138 (LPCSSSNPANNK) shows a compositional bias: polar residues. The segment covering 1142–1161 (DSNGNSDDMDGSSFSSFYSS) has biased composition (low complexity). The segment covering 1193–1208 (KIMEHPEEDQTQHGDG) has biased composition (basic and acidic residues).

In terms of assembly, forms a heterodimer with timeless (TIM); the complex then translocates into the nucleus. Post-translationally, phosphorylated with a circadian rhythmicity, probably by the double-time protein (dbt). Phosphorylation could be implicated in the stability of per monomer and in the formation of heterodimer per-tim.

The protein localises to the nucleus. It is found in the cytoplasm. The protein resides in the perinuclear region. Functionally, essential for biological clock functions. Determines the period length of circadian and ultradian rhythms; an increase in PER dosage leads to shortened circadian rhythms and a decrease leads to lengthened circadian rhythms. Essential for the circadian rhythmicity of locomotor activity, eclosion behavior, and for the rhythmic component of the male courtship song that originates in the thoracic nervous system. The biological cycle depends on the rhythmic formation and nuclear localization of the TIM-PER complex. Light induces the degradation of TIM, which promotes elimination of PER. Nuclear activity of the heterodimer coordinatively regulates PER and TIM transcription through a negative feedback loop. Behaves as a negative element in circadian transcriptional loop. Does not appear to bind DNA, suggesting indirect transcriptional inhibition. In Drosophila yakuba (Fruit fly), this protein is Period circadian protein (per).